Consider the following 814-residue polypeptide: Glycosyltransferase GlyD (814 aa).

A GT8 domain region spans residues 1-264 (MNKTIVLAGD…SQILQHHMGE (264 aa)). UDP is bound by residues 8 to 13 (AGDRNY) and 102 to 103 (DS). Residues Asp-102, Asp-104, and His-226 each coordinate Mn(2+). Residue 226–232 (HFTTYRK) coordinates UDP. The segment at 542-814 (EKPLDIIQVK…NSQIVARILN (273 aa)) is GT-D domain.

The protein in the N-terminal section; belongs to the glycosyltransferase 8 family. This sequence in the C-terminal section; belongs to the GT-D family.

It functions in the pathway protein modification; protein glycosylation. Functionally, involved in the polymorphic O-glycosylation of the serine-rich repeat protein PsrP. Catalyzes the third step in glycosylation PsrP in this bacteria. Transfers glucose from UDP-glucose to the terminal glucose moiety of already-glycosylated PsrP (using truncated substrates with PsrP SSR1-GlcNAc-Glc); the C-terminal GT-D domain is sufficient for this reaction in vitro. Also transfers galactose from UDP-galactose to the terminal glucose moiety of already-glycosylated PsrP; the C-terminal GT-D domain is also sufficient for this reaction in vitro. Activity is much higher with UDP-glucose, and the enzyme has a very marked preference for PsrP substrate that has already been modified by GlcNAc and glucose. In vitro has hydrolytic activity against UDP-galactose and to a lesser extent against UDP-glucose. Its function is as follows. Also catalyzes the fourth step in glycosylation of PsrP in this bacteria. Can transfer the sugar from both UDP-glucose and UDP-galactose to the terminal sugar moiety of PsrP-GlcNAc-Glc-Glc and PsrP-GlcNAc-Glc-Gal; the C-terminal GT-D domain is also sufficient for this reaction in vitro (using truncated substrates with glycosylated PsrP SSR1). The N-terminal GT-D domain can transfer galactose from UDP-galactose to PsrP-GlcNAc-Glc-Gal or PsrP-GlcNAc-Glc-Glc in the fourth step. This chain is Glycosyltransferase GlyD, found in Streptococcus pneumoniae serotype 4 (strain ATCC BAA-334 / TIGR4).